The chain runs to 209 residues: ATP-dependent Clp protease proteolytic subunit (209 aa).

The active-site Nucleophile is serine 107. The active site involves histidine 132.

Belongs to the peptidase S14 family. As to quaternary structure, fourteen ClpP subunits assemble into 2 heptameric rings which stack back to back to give a disk-like structure with a central cavity, resembling the structure of eukaryotic proteasomes.

The protein localises to the cytoplasm. It carries out the reaction Hydrolysis of proteins to small peptides in the presence of ATP and magnesium. alpha-casein is the usual test substrate. In the absence of ATP, only oligopeptides shorter than five residues are hydrolyzed (such as succinyl-Leu-Tyr-|-NHMec, and Leu-Tyr-Leu-|-Tyr-Trp, in which cleavage of the -Tyr-|-Leu- and -Tyr-|-Trp bonds also occurs).. Functionally, cleaves peptides in various proteins in a process that requires ATP hydrolysis. Has a chymotrypsin-like activity. Plays a major role in the degradation of misfolded proteins. The polypeptide is ATP-dependent Clp protease proteolytic subunit (Ruegeria pomeroyi (strain ATCC 700808 / DSM 15171 / DSS-3) (Silicibacter pomeroyi)).